We begin with the raw amino-acid sequence, 200 residues long: Protein GrpE (200 aa).

The protein belongs to the GrpE family. In terms of assembly, homodimer.

Its subcellular location is the cytoplasm. Functionally, participates actively in the response to hyperosmotic and heat shock by preventing the aggregation of stress-denatured proteins, in association with DnaK and GrpE. It is the nucleotide exchange factor for DnaK and may function as a thermosensor. Unfolded proteins bind initially to DnaJ; upon interaction with the DnaJ-bound protein, DnaK hydrolyzes its bound ATP, resulting in the formation of a stable complex. GrpE releases ADP from DnaK; ATP binding to DnaK triggers the release of the substrate protein, thus completing the reaction cycle. Several rounds of ATP-dependent interactions between DnaJ, DnaK and GrpE are required for fully efficient folding. This Geobacter sulfurreducens (strain ATCC 51573 / DSM 12127 / PCA) protein is Protein GrpE.